We begin with the raw amino-acid sequence, 77 residues long: U8-lycotoxin-Ls1m (77 aa).

An N-terminal signal peptide occupies residues 1–20 (MKLMIFTGLVLFAIVRLIEA). A propeptide spanning residues 21 to 26 (QAENEK) is cleaved from the precursor.

Belongs to the neurotoxin 19 (CSTX) family. 08 (U8-Lctx) subfamily. In terms of processing, contains 4 disulfide bonds. As to expression, expressed by the venom gland.

It is found in the secreted. In Lycosa singoriensis (Wolf spider), this protein is U8-lycotoxin-Ls1m.